An 829-amino-acid chain; its full sequence is Translation initiation factor IF-2 (829 aa).

Residues 128 to 137 are compositionally biased toward basic and acidic residues; that stretch reads QNAEEEKVEA. The segment at 128 to 157 is disordered; that stretch reads QNAEEEKVEASAKTVQNNEDIQPQTSKKKE. Polar residues predominate over residues 140–152; sequence KTVQNNEDIQPQT. The 171-residue stretch at 327–497 folds into the tr-type G domain; sequence TRAPVVTVMG…LLIAEMQDLK (171 aa). Positions 336–343 are G1; that stretch reads GHVDHGKT. 336–343 is a binding site for GTP; sequence GHVDHGKT. Positions 361-365 are G2; it reads GITQH. A G3 region spans residues 383 to 386; the sequence is DTPG. GTP contacts are provided by residues 383–387 and 437–440; these read DTPGH and NKID. The segment at 437–440 is G4; the sequence is NKID. The G5 stretch occupies residues 473 to 475; that stretch reads SAL.

It belongs to the TRAFAC class translation factor GTPase superfamily. Classic translation factor GTPase family. IF-2 subfamily.

The protein localises to the cytoplasm. One of the essential components for the initiation of protein synthesis. Protects formylmethionyl-tRNA from spontaneous hydrolysis and promotes its binding to the 30S ribosomal subunits. Also involved in the hydrolysis of GTP during the formation of the 70S ribosomal complex. This is Translation initiation factor IF-2 from Rickettsia felis (strain ATCC VR-1525 / URRWXCal2) (Rickettsia azadi).